A 198-amino-acid polypeptide reads, in one-letter code: MQLKRVAEAKLPTPWGDFLMVGFEELATGHDHVALVFGDISGQTPVLARVHSECLTGDALFSLRCDCGFQLEAALTHIAEEGRGILLYHRQEGRNIGLLNKIRAYALQDQGYDTVEANHQLGFAADERDFTLCADMFKLLGVDAVRLLTNNPKKVEILTEAGINIVERVPLIVGRNPKNAHYLDTKAAKMGHLLGKTE.

Arg49–Glu53 is a GTP binding site. Zn(2+) is bound by residues Cys54, Cys65, and Cys67. Residues Gln70, Glu92–Arg94, and Thr114 contribute to the GTP site. Asp126 (proton acceptor) is an active-site residue. Arg128 serves as the catalytic Nucleophile. Positions 149 and 154 each coordinate GTP.

It belongs to the GTP cyclohydrolase II family. As to quaternary structure, homodimer. The cofactor is Zn(2+).

It catalyses the reaction GTP + 4 H2O = 2,5-diamino-6-hydroxy-4-(5-phosphoribosylamino)-pyrimidine + formate + 2 phosphate + 3 H(+). Its pathway is cofactor biosynthesis; riboflavin biosynthesis; 5-amino-6-(D-ribitylamino)uracil from GTP: step 1/4. In terms of biological role, catalyzes the conversion of GTP to 2,5-diamino-6-ribosylamino-4(3H)-pyrimidinone 5'-phosphate (DARP), formate and pyrophosphate. This is GTP cyclohydrolase-2 from Escherichia fergusonii (strain ATCC 35469 / DSM 13698 / CCUG 18766 / IAM 14443 / JCM 21226 / LMG 7866 / NBRC 102419 / NCTC 12128 / CDC 0568-73).